Here is a 153-residue protein sequence, read N- to C-terminus: Ribosome maturation factor RimP (153 aa).

This sequence belongs to the RimP family.

It localises to the cytoplasm. Functionally, required for maturation of 30S ribosomal subunits. The sequence is that of Ribosome maturation factor RimP from Nostoc punctiforme (strain ATCC 29133 / PCC 73102).